A 237-amino-acid chain; its full sequence is N-(5'-phosphoribosyl)anthranilate isomerase (237 aa).

The protein belongs to the TrpF family.

The enzyme catalyses N-(5-phospho-beta-D-ribosyl)anthranilate = 1-(2-carboxyphenylamino)-1-deoxy-D-ribulose 5-phosphate. Its pathway is amino-acid biosynthesis; L-tryptophan biosynthesis; L-tryptophan from chorismate: step 3/5. This Komagataella pastoris (Yeast) protein is N-(5'-phosphoribosyl)anthranilate isomerase (TRP1).